A 164-amino-acid chain; its full sequence is MMHLLADPETWVAIAFVILMGLFAYLGVHRMVLKALDHRADRIRDELAEAKRLKDEAAKVLADYKTRRASAEREAEEIVTSAKAEAERIAADAKAKMEDFVARRTKAAESKIALAEAQALADVRAAAAEAAVQAAATVLSQSVKGGLGDDLVAKGIAEVSRKLN.

A helical membrane pass occupies residues 8–28 (PETWVAIAFVILMGLFAYLGV).

It belongs to the ATPase B chain family. F-type ATPases have 2 components, F(1) - the catalytic core - and F(0) - the membrane proton channel. F(1) has five subunits: alpha(3), beta(3), gamma(1), delta(1), epsilon(1). F(0) has three main subunits: a(1), b(2) and c(10-14). The alpha and beta chains form an alternating ring which encloses part of the gamma chain. F(1) is attached to F(0) by a central stalk formed by the gamma and epsilon chains, while a peripheral stalk is formed by the delta and b chains.

Its subcellular location is the cell inner membrane. F(1)F(0) ATP synthase produces ATP from ADP in the presence of a proton or sodium gradient. F-type ATPases consist of two structural domains, F(1) containing the extramembraneous catalytic core and F(0) containing the membrane proton channel, linked together by a central stalk and a peripheral stalk. During catalysis, ATP synthesis in the catalytic domain of F(1) is coupled via a rotary mechanism of the central stalk subunits to proton translocation. Functionally, component of the F(0) channel, it forms part of the peripheral stalk, linking F(1) to F(0). The polypeptide is ATP synthase subunit b 1 (Bradyrhizobium sp. (strain ORS 278)).